A 163-amino-acid polypeptide reads, in one-letter code: Large ribosomal subunit protein uL10 (163 aa).

This sequence belongs to the universal ribosomal protein uL10 family. As to quaternary structure, part of the ribosomal stalk of the 50S ribosomal subunit. The N-terminus interacts with L11 and the large rRNA to form the base of the stalk. The C-terminus forms an elongated spine to which L12 dimers bind in a sequential fashion forming a multimeric L10(L12)X complex.

Functionally, forms part of the ribosomal stalk, playing a central role in the interaction of the ribosome with GTP-bound translation factors. In Pasteurella multocida (strain Pm70), this protein is Large ribosomal subunit protein uL10 (rplJ).